The following is a 255-amino-acid chain: Protein DAL82 (255 aa).

A disordered region spans residues P87 to T149. Residues P128–S138 are compositionally biased toward basic and acidic residues.

Its function is as follows. Positive regulator of allophanate-induced genes in S.cerevisiae. The polypeptide is Protein DAL82 (DAL82) (Saccharomyces cerevisiae (strain ATCC 204508 / S288c) (Baker's yeast)).